Reading from the N-terminus, the 348-residue chain is Dihydroorotase (348 aa).

The Zn(2+) site is built by His-17 and His-19. Substrate contacts are provided by residues 19 to 21 (HLR) and Asn-45. 3 residues coordinate Zn(2+): Lys-103, His-140, and His-178. N6-carboxylysine is present on Lys-103. Residue His-140 coordinates substrate. Leu-223 contributes to the substrate binding site. Residue Asp-251 coordinates Zn(2+). Asp-251 is an active-site residue. Substrate-binding residues include His-255 and Ala-267.

It belongs to the metallo-dependent hydrolases superfamily. DHOase family. Class II DHOase subfamily. In terms of assembly, homodimer. Requires Zn(2+) as cofactor.

It catalyses the reaction (S)-dihydroorotate + H2O = N-carbamoyl-L-aspartate + H(+). Its pathway is pyrimidine metabolism; UMP biosynthesis via de novo pathway; (S)-dihydroorotate from bicarbonate: step 3/3. Functionally, catalyzes the reversible cyclization of carbamoyl aspartate to dihydroorotate. In Yersinia pseudotuberculosis serotype O:1b (strain IP 31758), this protein is Dihydroorotase.